The chain runs to 361 residues: Chorismate synthase (361 aa).

NADP(+)-binding residues include Arg48 and Arg54. FMN-binding positions include 125 to 127, 238 to 239, Gly278, 293 to 297, and Arg319; these read RSS, NA, and KPTSS.

The protein belongs to the chorismate synthase family. In terms of assembly, homotetramer. FMNH2 serves as cofactor.

It carries out the reaction 5-O-(1-carboxyvinyl)-3-phosphoshikimate = chorismate + phosphate. It participates in metabolic intermediate biosynthesis; chorismate biosynthesis; chorismate from D-erythrose 4-phosphate and phosphoenolpyruvate: step 7/7. In terms of biological role, catalyzes the anti-1,4-elimination of the C-3 phosphate and the C-6 proR hydrogen from 5-enolpyruvylshikimate-3-phosphate (EPSP) to yield chorismate, which is the branch point compound that serves as the starting substrate for the three terminal pathways of aromatic amino acid biosynthesis. This reaction introduces a second double bond into the aromatic ring system. This Vibrio parahaemolyticus serotype O3:K6 (strain RIMD 2210633) protein is Chorismate synthase.